A 194-amino-acid polypeptide reads, in one-letter code: dTTP/UTP pyrophosphatase (194 aa).

Residue aspartate 73 is the Proton acceptor of the active site.

Belongs to the Maf family. YhdE subfamily. A divalent metal cation is required as a cofactor.

The protein resides in the cytoplasm. The catalysed reaction is dTTP + H2O = dTMP + diphosphate + H(+). It catalyses the reaction UTP + H2O = UMP + diphosphate + H(+). In terms of biological role, nucleoside triphosphate pyrophosphatase that hydrolyzes dTTP and UTP. May have a dual role in cell division arrest and in preventing the incorporation of modified nucleotides into cellular nucleic acids. The protein is dTTP/UTP pyrophosphatase of Clostridium botulinum (strain Kyoto / Type A2).